Consider the following 532-residue polypeptide: CTP synthase (532 aa).

Positions 1-268 (MTTKYIFVTG…DEIVCDHLNL (268 aa)) are amidoligase domain. A CTP-binding site is contributed by Ser14. Ser14 contacts UTP. 15–20 (SLGKGI) is an ATP binding site. Residue Tyr55 participates in L-glutamine binding. Residue Asp72 coordinates ATP. Residues Asp72 and Glu142 each coordinate Mg(2+). Residues 149–151 (DIE), 189–194 (KSKPTQ), and Lys225 each bind CTP. UTP-binding positions include 189–194 (KSKPTQ) and Lys225. 241-243 (RDA) contacts ATP. Residues 293-532 (KIALVGKYVA…REFIQASLRK (240 aa)) form the Glutamine amidotransferase type-1 domain. Gly355 is a binding site for L-glutamine. Cys382 (nucleophile; for glutamine hydrolysis) is an active-site residue. Residues 383-386 (LGMQ), Glu406, and Arg463 contribute to the L-glutamine site. Residues His508 and Glu510 contribute to the active site.

The protein belongs to the CTP synthase family. In terms of assembly, homotetramer.

The enzyme catalyses UTP + L-glutamine + ATP + H2O = CTP + L-glutamate + ADP + phosphate + 2 H(+). It catalyses the reaction L-glutamine + H2O = L-glutamate + NH4(+). The catalysed reaction is UTP + NH4(+) + ATP = CTP + ADP + phosphate + 2 H(+). It participates in pyrimidine metabolism; CTP biosynthesis via de novo pathway; CTP from UDP: step 2/2. With respect to regulation, allosterically activated by GTP, when glutamine is the substrate; GTP has no effect on the reaction when ammonia is the substrate. The allosteric effector GTP functions by stabilizing the protein conformation that binds the tetrahedral intermediate(s) formed during glutamine hydrolysis. Inhibited by the product CTP, via allosteric rather than competitive inhibition. Catalyzes the ATP-dependent amination of UTP to CTP with either L-glutamine or ammonia as the source of nitrogen. Regulates intracellular CTP levels through interactions with the four ribonucleotide triphosphates. The protein is CTP synthase of Halalkalibacterium halodurans (strain ATCC BAA-125 / DSM 18197 / FERM 7344 / JCM 9153 / C-125) (Bacillus halodurans).